The chain runs to 346 residues: Galanin receptor type 1 (346 aa).

At 1–33 (MELAPVNLSEGNGSDPEPPAEPRPLFGIGVENF) the chain is on the extracellular side. Asn7 and Asn12 each carry an N-linked (GlcNAc...) asparagine glycan. The helical transmembrane segment at 34–54 (ITLVVFGLIFAMGVLGNSLVI) threads the bilayer. The Cytoplasmic portion of the chain corresponds to 55-69 (TVLARSKPGKPRSTT). A helical membrane pass occupies residues 70–90 (NLFILNLSIADLAYLLFCIPF). At 91–108 (QATVYALPTWVLGAFICK) the chain is on the extracellular side. Cys107 and Cys185 are joined by a disulfide. The chain crosses the membrane as a helical span at residues 109-130 (FIHYFFTVSMLVSIFTLAAMSV). Residues 131–150 (DRYVAIVHSRRSSSLRVSRN) are Cytoplasmic-facing. The helical transmembrane segment at 151-171 (ALLGVGFIWALSIAMASPVAY) threads the bilayer. The Extracellular portion of the chain corresponds to 172-196 (YQRLFHRDSNQTFCWEHWPNQLHKK). A glycan (N-linked (GlcNAc...) asparagine) is linked at Asn181. The helical transmembrane segment at 197 to 217 (AYVVCTFVFGYLLPLLLICFC) threads the bilayer. Residues 218–246 (YAKVLNHLHKKLKNMSKKSEASKKKTAQT) are Cytoplasmic-facing. The chain crosses the membrane as a helical span at residues 247–267 (VLVVVVVFGISWLPHHVIHLW). The Extracellular segment spans residues 268 to 269 (AE). The chain crosses the membrane as a helical span at residues 270–290 (FGAFPLTPASFFFRITAHCLA). Residues 291-346 (YSNSSVNPIIYAFLSENFRKAYKQVFKCRVCNESPHGDAKEKNRIDTPPSTNCTHV) are Cytoplasmic-facing. Cys318 carries S-palmitoyl cysteine lipidation. Positions 326-335 (HGDAKEKNRI) are enriched in basic and acidic residues. Residues 326-346 (HGDAKEKNRIDTPPSTNCTHV) form a disordered region.

It belongs to the G-protein coupled receptor 1 family. In terms of assembly, interacts with GRP39 AND HTR1A. Three cysteine residues are found in the C-terminus, at least one of which may be palmitoylated. In terms of tissue distribution, spinal cord, small intestine, Rin14B insulinoma cells and several brain regions, particularly ventral hippocampus, amygdala, supraoptic nucleus, hypothalamus, thalamus, lateral parabrachial nucleus and locus coeruleus.

It localises to the cell membrane. Receptor for the hormone galanin. The activity of this receptor is mediated by G proteins that inhibit adenylate cyclase activity. This chain is Galanin receptor type 1 (Galr1), found in Rattus norvegicus (Rat).